Reading from the N-terminus, the 692-residue chain is Single-strand DNA endonuclease ASTE1 (692 aa).

This sequence belongs to the asteroid family.

Functionally, structure-specific DNA endonuclease that specifically cleaves single-stranded DNA and 3' overhang DNA. This Danio rerio (Zebrafish) protein is Single-strand DNA endonuclease ASTE1 (aste1a).